The following is a 639-amino-acid chain: CTTNBP2 N-terminal-like protein (639 aa).

Residues 87–285 (MKQCKNMQER…DLEASHQHSS (199 aa)) adopt a coiled-coil conformation. Ser284 and Ser285 each carry phosphoserine. 3 disordered regions span residues 387 to 430 (VENG…PCSS), 463 to 490 (RHKF…LSPT), and 511 to 609 (RFTS…AASL). Low complexity-rich tracts occupy residues 407–430 (PSSG…PCSS) and 467–477 (QSQADQDQQAS). A phosphoserine mark is found at Ser481, Ser488, Ser523, Ser527, Ser560, Ser563, and Ser568. Polar residues predominate over residues 511 to 529 (RFTSQQGPIKPVSPNSSPF). Phosphothreonine is present on residues Thr570 and Thr590. A compositionally biased stretch (low complexity) spans 587-600 (PGLTPSPSATTPLT). Position 592 is a phosphoserine (Ser592).

Interacts with CTTN/cortactin; this interaction may redistribute CTTN to stress fibers. May form homomers. Associates with the core of STRIPAK complexes composed of PP2A catalytic and scaffolding subunits, the striatins (PP2A regulatory subunits), the striatin-associated proteins MOB4, STRIP1 and STRIP2, PDCD10 and members of the STE20 kinases, such as STK24 and STK26.

It is found in the cell projection. The protein resides in the lamellipodium. Its subcellular location is the cytoplasm. The protein localises to the cytoskeleton. It localises to the stress fiber. In terms of biological role, regulates lamellipodial actin dynamics in a CTTN-dependent manner. Associates with core striatin-interacting phosphatase and kinase (STRIPAK) complex to form CTTNBP2NL-STRIPAK complexes. STRIPAK complexes have critical roles in protein (de)phosphorylation and are regulators of multiple signaling pathways including Hippo, MAPK, nuclear receptor and cytoskeleton remodeling. Different types of STRIPAK complexes are involved in a variety of biological processes such as cell growth, differentiation, apoptosis, metabolism and immune regulation. The polypeptide is CTTNBP2 N-terminal-like protein (CTTNBP2NL) (Pongo abelii (Sumatran orangutan)).